A 2161-amino-acid polypeptide reads, in one-letter code: Voltage-dependent L-type calcium channel subunit alpha-1D (2161 aa).

3 disordered regions span residues 1–21 (MMMMMMMKKMQHQRQQQADHA), 30–49 (TRLPLSGEGPTSQPNSSKQT), and 64–100 (KAAQTMSTSAPPPVGSLSQRKRQQYAKSKKQGNSSNS). At 1-126 (MMMMMMMKKM…RACISIVEWK (126 aa)) the chain is on the cytoplasmic side. Residues 38 to 49 (GPTSQPNSSKQT) show a composition bias toward polar residues. Positions 82-93 (QRKRQQYAKSKK) are enriched in basic residues. The I repeat unit spans residues 113-409 (NPIRRACISI…LVLGVLSGEF (297 aa)). A helical membrane pass occupies residues 127 to 145 (PFDIFILLAIFANCVALAI). At 146-163 (YIPFPEDDSNSTNHNLEK) the chain is on the extracellular side. Asn155 is a glycosylation site (N-linked (GlcNAc...) asparagine). Residues 164–183 (VEYAFLIIFTVETFLKIIAY) traverse the membrane as a helical segment. Residues 184–195 (GLLLHPNAYVRN) are Cytoplasmic-facing. The helical transmembrane segment at 196 to 214 (GWNLLDFVIVIVGLFSVIL) threads the bilayer. Topologically, residues 215-235 (EQLTKETEGGNHSSGKSGGFD) are extracellular. An N-linked (GlcNAc...) asparagine glycan is attached at Asn225. Residues 236–254 (VKALRAFRVLRPLRLVSGV) traverse the membrane as a helical segment. The Cytoplasmic segment spans residues 255-273 (PSLQVVLNSIIKAMVPLLH). The chain crosses the membrane as a helical span at residues 274–293 (IALLVLFVIIIYAIIGLELF). Topologically, residues 294 to 381 (IGKMHKTCFF…WMNDAMGFEL (88 aa)) are extracellular. Asn329 carries N-linked (GlcNAc...) asparagine glycosylation. Glu364 is a binding site for Ca(2+). A helical transmembrane segment spans residues 382-406 (PWVYFVSLVIFGSFFVLNLVLGVLS). Over 407 to 523 (GEFSKEREKA…RRCRAAVKSV (117 aa)) the chain is Cytoplasmic. Positions 429–446 (QQLEEDLKGYLDWITQAE) are binding to the beta subunit. The interval 449-482 (DPENEEEGGEEGKRNTSMPTSETESVNTENVSGE) is disordered. A compositionally biased stretch (polar residues) spans 463 to 479 (NTSMPTSETESVNTENV). The stretch at 509 to 755 (NRFNRRRCRA…VFLAIAVDNL (247 aa)) is one II repeat. A helical transmembrane segment spans residues 524–543 (TFYWLVIVLVFLNTLTISSE). At 544–558 (HYNQPDWLTQIQDIA) the chain is on the extracellular side. Residues 559–577 (NKVLLALFTCEMLVKMYSL) traverse the membrane as a helical segment. Residues 578 to 585 (GLQAYFVS) are Cytoplasmic-facing. A helical transmembrane segment spans residues 586–604 (LFNRFDCFVVCGGITETIL). Residues 605–614 (VELEIMSPLG) lie on the Extracellular side of the membrane. A helical membrane pass occupies residues 615–633 (ISVFRCVRLLRIFKVTRHW). The Cytoplasmic portion of the chain corresponds to 634 to 652 (TSLSNLVASLLNSMKSIAS). Residues 653 to 673 (LLLLLFLFIIIFSLLGMQLFG) traverse the membrane as a helical segment. Residues 674–727 (GKFNFDETQTKRSTFDNFPQALLTVFQILTGEDWNAVMYDGIMAYGGPSSSGMI) lie on the Extracellular side of the membrane. Glu705 provides a ligand contact to Ca(2+). A helical membrane pass occupies residues 728-752 (VCIYFIILFICGNYILLNVFLAIAV). At 753 to 886 (DNLADAESLN…VGCHKLINHH (134 aa)) the chain is on the cytoplasmic side. Basic and acidic residues predominate over residues 766-790 (KEEAEEKERKKIARKESLENKKNNK). Positions 766–850 (KEEAEEKERK…AGPRPRRISE (85 aa)) are disordered. The segment covering 791-802 (PEVNQIANSDNK) has biased composition (polar residues). Positions 825–838 (VGEEEEEEEEDEPE) are enriched in acidic residues. An III repeat occupies 873 to 1155 (NPIRVGCHKL…IFVGFVIVTF (283 aa)). The helical transmembrane segment at 887–905 (IFTNLILVFIMLSSAALAA) threads the bilayer. Residues 906 to 921 (EDPIRSHSFRNTILGY) are Extracellular-facing. A helical transmembrane segment spans residues 922-941 (FDYAFTAIFTVEILLKMTTF). The Cytoplasmic portion of the chain corresponds to 942 to 953 (GAFLHKGAFCRN). A helical membrane pass occupies residues 954–972 (YFNLLDMLVVGVSLVSFGI). Residues 973 to 978 (QSSAIS) are Extracellular-facing. A helical membrane pass occupies residues 979–998 (VVKILRVLRVLRPLRAINRA). Topologically, residues 999–1017 (KGLKHVVQCVFVAIRTIGN) are cytoplasmic. Residues 1018–1037 (IMIVTTLLQFMFACIGVQLF) form a helical membrane-spanning segment. Residues 1038–1127 (KGKFYRCTDE…IGPIYNHRVE (90 aa)) are Extracellular-facing. The dihydropyridine binding stretch occupies residues 1075-1165 (RIWQNSDFNF…QEQGEKEYKN (91 aa)). Glu1101 contacts Ca(2+). The chain crosses the membrane as a helical span at residues 1128–1148 (ISIFFIIYIIIVAFFMMNIFV). Over 1149–1205 (GFVIVTFQEQGEKEYKNCELDKNQRQCVEYALKARPLRRYIPKNPYQYKFWYVVNSS) the chain is Cytoplasmic. Residues 1192–1467 (NPYQYKFWYV…LFVAVIMDNF (276 aa)) form an IV repeat. Residues 1206–1224 (PFEYMMFVLIMLNTLCLAM) form a helical membrane-spanning segment. At 1225-1239 (QHYEQSKMFNDAMDI) the chain is on the extracellular side. A helical transmembrane segment spans residues 1240–1259 (LNMVFTGVFTVEMVLKVIAF). Topologically, residues 1260-1266 (KPKGYFS) are cytoplasmic. A helical membrane pass occupies residues 1267–1288 (DAWNTFDSLIVIGSIIDVALSE). At 1289–1313 (ADPTESENVPVPTATPGNSEESNRI) the chain is on the extracellular side. The chain crosses the membrane as a helical span at residues 1314-1333 (SITFFRLFRVMRLVKLLSRG). The Cytoplasmic segment spans residues 1334–1352 (EGIRTLLWTFIKSFQALPY). A helical membrane pass occupies residues 1353–1372 (VALLIAMLFFIYAVIGMQMF). At 1373–1439 (GKVAMRDNNQ…GEEYTCGSNF (67 aa)) the chain is on the extracellular side. Residues 1420-1486 (LCDPESDYNP…LGPHHLDEFK (67 aa)) are dihydropyridine binding. The segment at 1432–1475 (EYTCGSNFAIVYFISFYMLCAFLIINLFVAVIMDNFDYLTRDWS) is phenylalkylamine binding. A helical transmembrane segment spans residues 1440–1464 (AIVYFISFYMLCAFLIINLFVAVIM). Topologically, residues 1465 to 2161 (DNFDYLTRDW…ADEMICITTL (697 aa)) are cytoplasmic. Disordered stretches follow at residues 1659–1678 (SCDLQDDEPEETKREEEDDV), 1684–1804 (ALLG…VKRT), 1872–1919 (PGRN…ASHR), and 2108–2152 (NGNV…EDLA). Residues 1745–1763 (SIGKQVPTSTNANLNNANM) are compositionally biased toward polar residues. Residues 1779–1797 (HVSENGHHSSHKHDREPQR) are compositionally biased toward basic and acidic residues. A compositionally biased stretch (acidic residues) spans 2138–2152 (SDEEPDPGRDEEDLA).

Belongs to the calcium channel alpha-1 subunit (TC 1.A.1.11) family. CACNA1D subfamily. In terms of assembly, voltage-dependent calcium channels are multisubunit complexes, consisting of alpha-1, alpha-2, beta and delta subunits in a 1:1:1:1 ratio. The channel activity is directed by the pore-forming and voltage-sensitive alpha-1 subunit. In many cases, this subunit is sufficient to generate voltage-sensitive calcium channel activity. The auxiliary subunits beta and alpha-2/delta linked by a disulfide bridge regulate the channel activity. Channel activity is further modulated, depending on the presence of specific delta subunit isoforms. Interacts (via IQ domain) with CABP1 and CABP4 in a calcium independent manner. Interacts with RIMBP2. As to expression, expressed in pancreatic islets and in brain, where it has been seen in cerebral cortex, hippocampus, basal ganglia, habenula and thalamus. Expressed in the small cell lung carcinoma cell line SCC-9. No expression in skeletal muscle.

The protein localises to the membrane. It catalyses the reaction Ca(2+)(in) = Ca(2+)(out). Its function is as follows. Voltage-sensitive calcium channels (VSCC) mediate the entry of calcium ions into excitable cells and are also involved in a variety of calcium-dependent processes, including muscle contraction, hormone or neurotransmitter release, gene expression, cell motility, cell division and cell death. The isoform alpha-1D gives rise to L-type calcium currents. Long-lasting (L-type) calcium channels belong to the 'high-voltage activated' (HVA) group. They are blocked by dihydropyridines (DHP), phenylalkylamines, and by benzothiazepines. Functionally, voltage-sensitive calcium channels (VSCC) mediate the entry of calcium ions into excitable cells and are also involved in a variety of calcium-dependent processes, including muscle contraction, hormone or neurotransmitter release, gene expression, cell motility, cell division and cell death. The isoform alpha-1D gives rise to L-type calcium currents. The polypeptide is Voltage-dependent L-type calcium channel subunit alpha-1D (CACNA1D) (Homo sapiens (Human)).